The chain runs to 165 residues: 2-C-methyl-D-erythritol 2,4-cyclodiphosphate synthase (165 aa).

A divalent metal cation is bound by residues Asp-12 and His-14. Residues 12-14 (DVH) and 38-39 (HS) contribute to the 4-CDP-2-C-methyl-D-erythritol 2-phosphate site. His-46 contributes to the a divalent metal cation binding site. Residues 60–62 (DIG), 65–69 (FPDTD), Phe-143, and Arg-146 each bind 4-CDP-2-C-methyl-D-erythritol 2-phosphate.

Belongs to the IspF family. As to quaternary structure, homotrimer. A divalent metal cation serves as cofactor.

The catalysed reaction is 4-CDP-2-C-methyl-D-erythritol 2-phosphate = 2-C-methyl-D-erythritol 2,4-cyclic diphosphate + CMP. It functions in the pathway isoprenoid biosynthesis; isopentenyl diphosphate biosynthesis via DXP pathway; isopentenyl diphosphate from 1-deoxy-D-xylulose 5-phosphate: step 4/6. Involved in the biosynthesis of isopentenyl diphosphate (IPP) and dimethylallyl diphosphate (DMAPP), two major building blocks of isoprenoid compounds. Catalyzes the conversion of 4-diphosphocytidyl-2-C-methyl-D-erythritol 2-phosphate (CDP-ME2P) to 2-C-methyl-D-erythritol 2,4-cyclodiphosphate (ME-CPP) with a corresponding release of cytidine 5-monophosphate (CMP). This is 2-C-methyl-D-erythritol 2,4-cyclodiphosphate synthase from Aromatoleum aromaticum (strain DSM 19018 / LMG 30748 / EbN1) (Azoarcus sp. (strain EbN1)).